The following is a 288-amino-acid chain: 4-diphosphocytidyl-2-C-methyl-D-erythritol kinase (288 aa).

Residue Lys-12 is part of the active site. Residue 95–105 (PAGGGVGGGSS) participates in ATP binding. The active site involves Asp-137.

Belongs to the GHMP kinase family. IspE subfamily.

The catalysed reaction is 4-CDP-2-C-methyl-D-erythritol + ATP = 4-CDP-2-C-methyl-D-erythritol 2-phosphate + ADP + H(+). It functions in the pathway isoprenoid biosynthesis; isopentenyl diphosphate biosynthesis via DXP pathway; isopentenyl diphosphate from 1-deoxy-D-xylulose 5-phosphate: step 3/6. Functionally, catalyzes the phosphorylation of the position 2 hydroxy group of 4-diphosphocytidyl-2C-methyl-D-erythritol. This chain is 4-diphosphocytidyl-2-C-methyl-D-erythritol kinase, found in Halorhodospira halophila (strain DSM 244 / SL1) (Ectothiorhodospira halophila (strain DSM 244 / SL1)).